The chain runs to 342 residues: Tetraacyldisaccharide 4'-kinase (342 aa).

68-75 (TVGGTGKT) lines the ATP pocket.

The protein belongs to the LpxK family.

It catalyses the reaction a lipid A disaccharide + ATP = a lipid IVA + ADP + H(+). It participates in glycolipid biosynthesis; lipid IV(A) biosynthesis; lipid IV(A) from (3R)-3-hydroxytetradecanoyl-[acyl-carrier-protein] and UDP-N-acetyl-alpha-D-glucosamine: step 6/6. Functionally, transfers the gamma-phosphate of ATP to the 4'-position of a tetraacyldisaccharide 1-phosphate intermediate (termed DS-1-P) to form tetraacyldisaccharide 1,4'-bis-phosphate (lipid IVA). The protein is Tetraacyldisaccharide 4'-kinase of Burkholderia cenocepacia (strain ATCC BAA-245 / DSM 16553 / LMG 16656 / NCTC 13227 / J2315 / CF5610) (Burkholderia cepacia (strain J2315)).